The following is a 238-amino-acid chain: MGRKWANIVAKKTAKDGANSKVYAKFGVEIYVAAKKGDPDPETNSALKFVIDRAKQAQVPKHIIDKAIDKAKGNTDETFVEGRYEGFGPNGSMIIVDTLTSNVNRTAANVRSAFGKNGGNMGASGSVSFMFDKKGVVVFAGDDADAIFELLLEADVEVDDVEAEDGTITIIQLQLDLHKAIVALKESGIQEFNVTELEMIPQSEVSLEGDDLATFEKLYDALEDDEDVQKIYTNVDGF.

This sequence belongs to the TACO1 family. YeeN subfamily.

It localises to the cytoplasm. The protein is Probable transcriptional regulatory protein SSU98_0387 of Streptococcus suis (strain 98HAH33).